Consider the following 300-residue polypeptide: MKQITIASRESKLALWQTNFVKNRIQLELNIPCEISTMKTQGDIILDQPLNKIGGKALFMKELEVAMLSNKADIAVHSLKDVPYQLPQGFCLAGFMPREDPRDAFVSNKYNSIDDLPKGAVVGTSSLRRKAQLLHYRDDLEIRDLRGNIQTRLSKLDNGDYDAIILASAGLIRLELVERITQFIPVEISLPAVGQGIVVIEALERDNDLLEKIQKLNCRESSRVATAERAFNQELKGGCHVAIGAYAELDNNQITLMAMVASSDGKKILKRKMIGDDPTKLGKLLAQEMIALGAYKILES.

Cys-239 is subject to S-(dipyrrolylmethanemethyl)cysteine.

Belongs to the HMBS family. In terms of assembly, monomer. It depends on dipyrromethane as a cofactor.

It catalyses the reaction 4 porphobilinogen + H2O = hydroxymethylbilane + 4 NH4(+). The protein operates within porphyrin-containing compound metabolism; protoporphyrin-IX biosynthesis; coproporphyrinogen-III from 5-aminolevulinate: step 2/4. Tetrapolymerization of the monopyrrole PBG into the hydroxymethylbilane pre-uroporphyrinogen in several discrete steps. This Francisella tularensis subsp. tularensis (strain FSC 198) protein is Porphobilinogen deaminase.